We begin with the raw amino-acid sequence, 73 residues long: Beta-defensin 10 (73 aa).

An N-terminal signal peptide occupies residues 1 to 23; the sequence is MRTLCSLLLICCLLFSYTTPAVG. 3 disulfides stabilise this stretch: Cys37/Cys66, Cys44/Cys59, and Cys49/Cys67.

The protein belongs to the beta-defensin family. Expressed in both adult and neonate brain, and very weakly in kidneys, epididymis, and testis.

Its subcellular location is the secreted. Functionally, has antibacterial activity. This Mus musculus (Mouse) protein is Beta-defensin 10 (Defb10).